A 100-amino-acid polypeptide reads, in one-letter code: MAKKNMIQRELKRQKCVLKYETRRQLLKKQITLASTLREKLMLHRQLQKLPRNSSAVRLRNRCMITGRSRGYHRDFGLSRNVLREMAHQGLLPGVVKSSW.

The protein belongs to the universal ribosomal protein uS14 family. As to quaternary structure, part of the 30S ribosomal subunit.

The protein localises to the plastid. It is found in the chloroplast. Binds 16S rRNA, required for the assembly of 30S particles. The protein is Small ribosomal subunit protein uS14c of Stigeoclonium helveticum (Green alga).